The sequence spans 645 residues: Phosphomethylpyrimidine synthase (645 aa).

Residues M1–I12 are compositionally biased toward polar residues. The segment at M1 to Q25 is disordered. Substrate contacts are provided by residues N253, M282, Y311, H347, S367 to G369, D408 to R411, and E447. H451 lines the Zn(2+) pocket. Y474 contributes to the substrate binding site. H515 contributes to the Zn(2+) binding site. 3 residues coordinate [4Fe-4S] cluster: C595, C598, and C603.

This sequence belongs to the ThiC family. In terms of assembly, homodimer. [4Fe-4S] cluster serves as cofactor.

It carries out the reaction 5-amino-1-(5-phospho-beta-D-ribosyl)imidazole + S-adenosyl-L-methionine = 4-amino-2-methyl-5-(phosphooxymethyl)pyrimidine + CO + 5'-deoxyadenosine + formate + L-methionine + 3 H(+). Its pathway is cofactor biosynthesis; thiamine diphosphate biosynthesis. Its function is as follows. Catalyzes the synthesis of the hydroxymethylpyrimidine phosphate (HMP-P) moiety of thiamine from aminoimidazole ribotide (AIR) in a radical S-adenosyl-L-methionine (SAM)-dependent reaction. This Photorhabdus laumondii subsp. laumondii (strain DSM 15139 / CIP 105565 / TT01) (Photorhabdus luminescens subsp. laumondii) protein is Phosphomethylpyrimidine synthase.